The chain runs to 396 residues: Methionine import ATP-binding protein MetN 2 (396 aa).

Residues 41 to 280 (VSFELVGKVF…PRHGATRALL (240 aa)) enclose the ABC transporter domain. 77–84 (GRSGAGKS) is a binding site for ATP.

This sequence belongs to the ABC transporter superfamily. Methionine importer (TC 3.A.1.24) family. The complex is composed of two ATP-binding proteins (MetN), two transmembrane proteins (MetI) and a solute-binding protein (MetQ).

It is found in the cell inner membrane. It carries out the reaction L-methionine(out) + ATP + H2O = L-methionine(in) + ADP + phosphate + H(+). The enzyme catalyses D-methionine(out) + ATP + H2O = D-methionine(in) + ADP + phosphate + H(+). Part of the ABC transporter complex MetNIQ involved in methionine import. Responsible for energy coupling to the transport system. This Burkholderia pseudomallei (strain K96243) protein is Methionine import ATP-binding protein MetN 2.